Consider the following 457-residue polypeptide: Multidrug resistance protein MdtK (457 aa).

12 helical membrane passes run 11-31 (LLALAIPVIFAQIAQTSMGVV), 53-73 (IWLPAILFGHGLLLALTPVIA), 93-113 (VLAGLVSVLIMLVLWNAGYII), 127-147 (AVNYLRALLWGAPGYLFFQVM), 160-180 (GMAMGFIGLLVNIPVNYIFIY), 188-208 (LGGVGCGVATASVYWVMFFCM), 243-263 (MPVALALFFEVTLFAVVALLV), 276-296 (IALNFSSLMFVLPMSMSAAVT), 316-336 (RTGIIVGICLAVLTALFTVVF), 357-377 (LMLLAAIYQISDSIQVIGSGV), 387-407 (IFFITFIAYWVLGLPSGYILG), and 418-438 (PAGFWFGFILGLTSAAIMMMW).

It belongs to the multi antimicrobial extrusion (MATE) (TC 2.A.66.1) family. MdtK subfamily.

It is found in the cell inner membrane. Functionally, multidrug efflux pump that functions probably as a Na(+)/drug antiporter. The chain is Multidrug resistance protein MdtK from Cronobacter sakazakii (strain ATCC BAA-894) (Enterobacter sakazakii).